A 164-amino-acid chain; its full sequence is Lipoprotein signal peptidase (164 aa).

The next 4 helical transmembrane spans lie at 2-22, 40-60, 70-90, and 99-119; these read MSLLTGTGLRWMWLAVFAIVL, VVITPFFNLVHVYNTGAAFSF, WLFSGLAIVISGVLAVAMAKA, and LAYSLVIGGAIGNLIDRVVYG. Active-site residues include aspartate 123 and aspartate 142. A helical transmembrane segment spans residues 138-158; it reads FNVADMAISCGAVFIILDGFI.

Belongs to the peptidase A8 family.

The protein localises to the cell inner membrane. The catalysed reaction is Release of signal peptides from bacterial membrane prolipoproteins. Hydrolyzes -Xaa-Yaa-Zaa-|-(S,diacylglyceryl)Cys-, in which Xaa is hydrophobic (preferably Leu), and Yaa (Ala or Ser) and Zaa (Gly or Ala) have small, neutral side chains.. It participates in protein modification; lipoprotein biosynthesis (signal peptide cleavage). In terms of biological role, this protein specifically catalyzes the removal of signal peptides from prolipoproteins. This Tolumonas auensis (strain DSM 9187 / NBRC 110442 / TA 4) protein is Lipoprotein signal peptidase.